The primary structure comprises 191 residues: Imidazoleglycerol-phosphate dehydratase (191 aa).

The protein belongs to the imidazoleglycerol-phosphate dehydratase family.

It is found in the cytoplasm. The catalysed reaction is D-erythro-1-(imidazol-4-yl)glycerol 3-phosphate = 3-(imidazol-4-yl)-2-oxopropyl phosphate + H2O. It participates in amino-acid biosynthesis; L-histidine biosynthesis; L-histidine from 5-phospho-alpha-D-ribose 1-diphosphate: step 6/9. In Methanococcoides burtonii (strain DSM 6242 / NBRC 107633 / OCM 468 / ACE-M), this protein is Imidazoleglycerol-phosphate dehydratase.